We begin with the raw amino-acid sequence, 309 residues long: tRNA pseudouridine synthase B (309 aa).

The active-site Nucleophile is D52.

Belongs to the pseudouridine synthase TruB family. Type 1 subfamily.

It catalyses the reaction uridine(55) in tRNA = pseudouridine(55) in tRNA. Functionally, responsible for synthesis of pseudouridine from uracil-55 in the psi GC loop of transfer RNAs. This Leptospira interrogans serogroup Icterohaemorrhagiae serovar Lai (strain 56601) protein is tRNA pseudouridine synthase B.